A 494-amino-acid polypeptide reads, in one-letter code: Alpha-amylase-related protein (494 aa).

An N-terminal signal peptide occupies residues 1–20; it reads MIKFALALTLCLAGASLSLA. Residue glutamine 21 is modified to Pyrrolidone carboxylic acid. An intrachain disulfide couples cysteine 48 to cysteine 104. Ca(2+) contacts are provided by asparagine 118, glutamine 169, and aspartate 178. Cysteine 157 and cysteine 171 are oxidised to a cystine. Arginine 206 is a binding site for chloride. Aspartate 208 serves as the catalytic Nucleophile. A Ca(2+)-binding site is contributed by histidine 212. The Proton donor role is filled by glutamate 245. Residues asparagine 308 and arginine 343 each coordinate chloride. Disulfide bonds link cysteine 376–cysteine 382, cysteine 418–cysteine 441, and cysteine 448–cysteine 460.

Belongs to the glycosyl hydrolase 13 family. Monomer. Requires Ca(2+) as cofactor. The cofactor is chloride.

Its subcellular location is the secreted. It carries out the reaction Endohydrolysis of (1-&gt;4)-alpha-D-glucosidic linkages in polysaccharides containing three or more (1-&gt;4)-alpha-linked D-glucose units.. The protein is Alpha-amylase-related protein (Amyrel) of Drosophila serrata (Fruit fly).